The primary structure comprises 218 residues: Protein GrpE (218 aa).

Basic and acidic residues-rich tracts occupy residues 1 to 13 (MSKNNENIKHQNN) and 20 to 32 (VDKKETKNHNKQE). Positions 1–32 (MSKNNENIKHQNNDKVNNQVDKKETKNHNKQE) are disordered.

Belongs to the GrpE family. In terms of assembly, homodimer.

It is found in the cytoplasm. Participates actively in the response to hyperosmotic and heat shock by preventing the aggregation of stress-denatured proteins, in association with DnaK and GrpE. It is the nucleotide exchange factor for DnaK and may function as a thermosensor. Unfolded proteins bind initially to DnaJ; upon interaction with the DnaJ-bound protein, DnaK hydrolyzes its bound ATP, resulting in the formation of a stable complex. GrpE releases ADP from DnaK; ATP binding to DnaK triggers the release of the substrate protein, thus completing the reaction cycle. Several rounds of ATP-dependent interactions between DnaJ, DnaK and GrpE are required for fully efficient folding. In Ureaplasma parvum serovar 3 (strain ATCC 27815 / 27 / NCTC 11736), this protein is Protein GrpE.